The following is a 214-amino-acid chain: MKNLNIIDSVDVDAGADDPCVYLTFDDGPNPFCTPHILDVLAQHAVSATFFVIGANAEVHPGLVQRIVSEGHGVANHTMTHPDLATCSRPQVEREIDEANRAIISACPGASIRHIRAPYGKWTEEALVKSASLGLAPVHWSVDPRDWSCPGVDAIVDRVLAAAKPGSIVLLHEDGPPGAADPTKLPTLRDQTLAAISAIIKSLRSRGLTIRSLP.

A NodB homology domain is found at 19–211 (PCVYLTFDDG…SLRSRGLTIR (193 aa)). Aspartate 26 acts as the Proton acceptor in catalysis. A divalent metal cation is bound by residues histidine 77 and histidine 81. The active-site Proton donor is histidine 172.

This sequence belongs to the polysaccharide deacetylase family.

Its subcellular location is the cytoplasm. In terms of biological role, is involved in generating a small heat-stable compound (Nod), an acylated oligomer of N-acetylglucosamine, that stimulates mitosis in various plant protoplasts. This chain is Chitooligosaccharide deacetylase (nodB), found in Neorhizobium galegae (Rhizobium galegae).